The primary structure comprises 274 residues: Large ribosomal subunit protein uL2cz/uL2cy (274 aa).

Disordered regions lie at residues 1–22 (MAIN…DSQV) and 224–274 (NPVD…RRSK).

Belongs to the universal ribosomal protein uL2 family. Part of the 50S ribosomal subunit.

It is found in the plastid. The protein resides in the chloroplast. The sequence is that of Large ribosomal subunit protein uL2cz/uL2cy (rpl2-A) from Helianthus annuus (Common sunflower).